Consider the following 255-residue polypeptide: Type III pantothenate kinase (255 aa).

Position 6–13 (6–13) interacts with ATP; sequence DVGNTNIV. Substrate-binding positions include Y100 and 107–110; that span reads GADR. The Proton acceptor role is filled by D109. D129 serves as a coordination point for K(+). Residue T132 coordinates ATP. T184 is a binding site for substrate.

This sequence belongs to the type III pantothenate kinase family. Homodimer. NH4(+) is required as a cofactor. The cofactor is K(+).

The protein localises to the cytoplasm. The catalysed reaction is (R)-pantothenate + ATP = (R)-4'-phosphopantothenate + ADP + H(+). It functions in the pathway cofactor biosynthesis; coenzyme A biosynthesis; CoA from (R)-pantothenate: step 1/5. Its function is as follows. Catalyzes the phosphorylation of pantothenate (Pan), the first step in CoA biosynthesis. The protein is Type III pantothenate kinase of Caldanaerobacter subterraneus subsp. tengcongensis (strain DSM 15242 / JCM 11007 / NBRC 100824 / MB4) (Thermoanaerobacter tengcongensis).